Consider the following 117-residue polypeptide: Ribosome-binding factor A (117 aa).

The protein belongs to the RbfA family. As to quaternary structure, monomer. Binds 30S ribosomal subunits, but not 50S ribosomal subunits or 70S ribosomes.

The protein localises to the cytoplasm. Its function is as follows. One of several proteins that assist in the late maturation steps of the functional core of the 30S ribosomal subunit. Associates with free 30S ribosomal subunits (but not with 30S subunits that are part of 70S ribosomes or polysomes). Required for efficient processing of 16S rRNA. May interact with the 5'-terminal helix region of 16S rRNA. The protein is Ribosome-binding factor A of Lacticaseibacillus casei (strain BL23) (Lactobacillus casei).